We begin with the raw amino-acid sequence, 249 residues long: 2,3-bisphosphoglycerate-dependent phosphoglycerate mutase (249 aa).

Residues 9–16 (RHGQSQWN), 22–23 (TG), Arg-61, 88–91 (ERHY), Lys-99, 115–116 (RR), and 184–185 (GN) each bind substrate. Catalysis depends on His-10, which acts as the Tele-phosphohistidine intermediate. Glu-88 serves as the catalytic Proton donor/acceptor.

The protein belongs to the phosphoglycerate mutase family. BPG-dependent PGAM subfamily. In terms of assembly, homodimer.

The enzyme catalyses (2R)-2-phosphoglycerate = (2R)-3-phosphoglycerate. It functions in the pathway carbohydrate degradation; glycolysis; pyruvate from D-glyceraldehyde 3-phosphate: step 3/5. In terms of biological role, catalyzes the interconversion of 2-phosphoglycerate and 3-phosphoglycerate. The protein is 2,3-bisphosphoglycerate-dependent phosphoglycerate mutase of Xylella fastidiosa (strain 9a5c).